The sequence spans 377 residues: MQVVSSATLPPTVASADLAIVGGRSSDEDVIKYSAIQTIKQEQQQQQQQQSNTALPSYNFPFFNGMQNDFPPNRMLYNDNTMQKSENDHFTGMNLSTSASSSGNSTSSKDQSRRQFYTESSNSSGNGAAATSGSNGSSSSTESKSDVFNISMNAFAATPGSKSEDHNIPSFNMLSSYYTGALKLSNSTSFANPDPYQILGPTSKNLAHSGSGQTQLWQFLLELLSDKRYSEVITWEGTQGEFKLVDPDEVARKWGERKSKPNMNYDKMSRALRYYYDKNIMAKVHGKRYAYKFDFQGIAQALQPPTASHPQDYFNSHAMGRIAPDFSSWTSANYRSLNIAGFNNGSTIFNPSVNYSAFGATGTSNNLSAARAFPLYR.

The segment at 72–143 (PNRMLYNDNT…SNGSSSSTES (72 aa)) is disordered. Composition is skewed to low complexity over residues 96–109 (STSA…TSSK) and 118–142 (TESS…SSTE). Positions 214 to 294 (TQLWQFLLEL…HGKRYAYKFD (81 aa)) form a DNA-binding region, ETS.

Belongs to the ETS family. As to expression, expressed in the A-neurons in the male-specific genital sensilla (simple sense organs) known as rays.

The protein localises to the nucleus. The protein resides in the cell projection. Its subcellular location is the neuron projection. Functionally, transcription factor. Probably binds to DNA sequences containing the consensus motif 5'-CGGA[AT][AG]-3'. Positively modulates expression of dopamine pathway genes, acting as a terminal selector for differentiation of dopaminergic neurons; may act in concert with homeobox proteins ceh-40, ceh-43 and ceh-20. Required for axon navigation in some interneurons, perhaps acting in the same pathways as basement membrane protein nid-1 and unc-6/netrin. Plays a role in the differentiation of the ventral cord pioneer neuron AVG. Required for morphogenesis of the pharynx. The protein is Transcription factor ast-1 of Caenorhabditis elegans.